A 540-amino-acid polypeptide reads, in one-letter code: Phosphoenolpyruvate carboxykinase (ATP) (540 aa).

Arg-65 lines the substrate pocket. Residue Lys-87 is modified to N6-acetyllysine. The substrate site is built by Tyr-207 and Lys-213. ATP is bound by residues Lys-213, His-232, and 248–256 (GLSGTGKTT). Mn(2+) contacts are provided by Lys-213 and His-232. Asp-269 is a Mn(2+) binding site. ATP-binding positions include Glu-297, Arg-333, 449 to 450 (RI), and Thr-455. Arg-333 lines the substrate pocket. An N6-acetyllysine modification is found at Lys-523.

Belongs to the phosphoenolpyruvate carboxykinase (ATP) family. Monomer. Requires Mn(2+) as cofactor.

The protein localises to the cytoplasm. It carries out the reaction oxaloacetate + ATP = phosphoenolpyruvate + ADP + CO2. It functions in the pathway carbohydrate biosynthesis; gluconeogenesis. Functionally, involved in the gluconeogenesis. Catalyzes the conversion of oxaloacetate (OAA) to phosphoenolpyruvate (PEP) through direct phosphoryl transfer between the nucleoside triphosphate and OAA. This is Phosphoenolpyruvate carboxykinase (ATP) from Shigella flexneri.